We begin with the raw amino-acid sequence, 334 residues long: TPR repeat-containing protein YsoA (334 aa).

TPR repeat units lie at residues 17–50 (KDRL…DDTE), 52–84 (DLHL…GYGH), and 195–230 (HPII…EPSE).

The sequence is that of TPR repeat-containing protein YsoA (ysoA) from Bacillus subtilis (strain 168).